Consider the following 560-residue polypeptide: Trafficking protein particle complex II-specific subunit 65 (560 aa).

Residues 164 to 193 are disordered; the sequence is SSKNTNNHLEKNNRATHRVSSKNSEVHEAD. Serine 393 and serine 398 each carry phosphoserine.

Part of the multisubunit TRAPP (transport protein particle) II complex composed of BET3, BET5, TRS20, TRS23, TRS31, TRS33, TRS65, TRS120 and TRS130. Interacts directly with TRS120 and TRS130.

It is found in the cytoplasm. The protein resides in the golgi apparatus. The protein localises to the cis-Golgi network. It participates in glycan metabolism; beta-glucan biosynthesis. Functionally, specific subunit of the TRAPP II complex, a highly conserved vesicle tethering complex that functions in the late Golgi as a guanine nucleotide exchanger (GEF) for the Golgi YPT1 GTPase. TRS65 plays a role in the YPT GEF activity of TRAPP II in concert with the two other TRAPP II-specific subunits TRS120 and TRS130. Involved in cell wall (1--&gt;6)-beta-glucan synthesis. This chain is Trafficking protein particle complex II-specific subunit 65 (TRS65), found in Saccharomyces cerevisiae (strain ATCC 204508 / S288c) (Baker's yeast).